The chain runs to 1407 residues: Metabotropic glutamate receptor-like protein P (1407 aa).

At 1-696 (MKFKKKNIYW…KTIKVTSFVK (696 aa)) the chain is on the extracellular side. N-linked (GlcNAc...) asparagine glycans are attached at residues Asn43 and Asn58. PbH1 repeat units lie at residues 93 to 118 (ISDI…FDGG) and 129 to 150 (FVNV…FLYN). Residues Asn162, Asn179, Asn182, Asn230, Asn241, Asn270, Asn368, Asn391, Asn464, Asn512, Asn539, Asn544, Asn554, Asn571, Asn627, and Asn646 are each glycosylated (N-linked (GlcNAc...) asparagine). Residues 254 to 279 (ISNVIFESCEFIGNRANSTGGLSFLT) form a PbH1 3 repeat. The stretch at 452 to 476 (GYSVYIENCEVKNNTGLFKGCFIDT) is one PbH1 4 repeat. Residues 697-717 (FLVGTLAAILLIILIISGFIS) form a helical membrane-spanning segment. The Cytoplasmic segment spans residues 718-731 (LKYRKKRVIRYSNP). The chain crosses the membrane as a helical span at residues 732-752 (LFLCIILVGCIIFLITIPVLF). Residues 753-758 (GSTSAT) lie on the Extracellular side of the membrane. The helical transmembrane segment at 759–779 (CKIRFPIIVIGSCLVTSSVFI) threads the bilayer. Topologically, residues 780 to 806 (KQFRIWRLIKDIQLLRETNVENKYLLK) are cytoplasmic. Residues 807–827 (FISILMVIPIIIVICSFFIFP) form a helical membrane-spanning segment. At 828–853 (THEKYTFNQRDITITHYCSDGSYLAY) the chain is on the extracellular side. The chain crosses the membrane as a helical span at residues 854–874 (VIIFLVYQMAILLFGCYLVIV). The Cytoplasmic portion of the chain corresponds to 875–890 (CRKFRSIPGTFNEATY). Residues 891–911 (IGILIYNYTVVLIVAIPLAYV) form a helical membrane-spanning segment. At 912–919 (FNKNPLAN) the chain is on the extracellular side. Residues 920–940 (FLIFSISIIVFVLSTIILLFI) form a helical membrane-spanning segment. Over 941–1407 (PKFHFLLRKK…LSPINLSKRK (467 aa)) the chain is Cytoplasmic. Residues 991–1004 (QQRQGNLYNNNSLG) show a composition bias toward polar residues. Disordered regions lie at residues 991 to 1072 (QQRQ…DPNF), 1084 to 1248 (GKRK…SSIG), 1267 to 1351 (KKVK…NFNE), and 1369 to 1407 (FHQK…SKRK). Residues 1005 to 1029 (RSISSNTRKRSNNNINNNNNNNSFN) are compositionally biased toward low complexity. Polar residues predominate over residues 1030–1040 (MTGFSDSSSTI). Positions 1041–1071 (SNPNLTSFTSSPSSLNSSSDSDSTPDFNDPN) are enriched in low complexity. Positions 1084-1093 (GKRKSIEKNK) are enriched in basic and acidic residues. Low complexity-rich tracts occupy residues 1099–1147 (PNSP…NTPI), 1154–1246 (SSKT…SDSS), and 1276–1339 (SDST…NNNN). Positions 1315-1344 (NNNNNNNNNNNNNINNNNNNANNNNSDTDD) form a coiled coil.

It belongs to the G-protein coupled receptor 3 family. GABA-B receptor subfamily.

It localises to the membrane. In Dictyostelium discoideum (Social amoeba), this protein is Metabotropic glutamate receptor-like protein P (grlP).